We begin with the raw amino-acid sequence, 316 residues long: NAC domain-containing protein 22 (316 aa).

The 154-residue stretch at 17 to 170 folds into the NAC domain; the sequence is DLPGFRFHPT…DMVLCKIYRK (154 aa). A DNA-binding region spans residues 117 to 176; it reads IGLKKTLVFYQGRAPRGTKTDWVMNEYRLPDYGAARAAAPPPKEDMVLCKIYRKATPLKE. Residues 229–260 are disordered; sequence QSSSSSAAPSGSSSKNGGAGAPREAKKEEADV. The segment covering 230-244 has biased composition (low complexity); the sequence is SSSSSAAPSGSSSKN.

It localises to the nucleus. Functionally, transcription activator that binds sequence-specific DNA motifs. Involved in stress response. Plays a positive role in drought and salt stress tolerance through the modulation of abscisic acid-mediated signaling. The chain is NAC domain-containing protein 22 from Oryza sativa subsp. japonica (Rice).